The chain runs to 273 residues: Protein BMH2 (273 aa).

At Ser2 the chain carries N-acetylserine. The segment at 236 to 273 is disordered; it reads DISESGQEDQQQQQQQQQQQQQQQQQAPAEQTQGEPTK. Low complexity predominate over residues 245–261; the sequence is QQQQQQQQQQQQQQQQQ. The segment covering 262-273 has biased composition (polar residues); it reads APAEQTQGEPTK.

Belongs to the 14-3-3 family. In terms of assembly, interacts with NTH1 (via N-terminus when phosphorylated by PKA); the interaction is direct and activates NTH1. Interacts with FIN1.

Its subcellular location is the cytoplasm. It localises to the nucleus. The protein is Protein BMH2 (BMH2) of Saccharomyces cerevisiae (strain ATCC 204508 / S288c) (Baker's yeast).